Here is a 623-residue protein sequence, read N- to C-terminus: Chaperone protein HtpG (623 aa).

The segment at 1–336 is a; substrate-binding; that stretch reads MVSKQQTMGF…ASDLPLNISR (336 aa). Positions 337-550 are b; that stretch reads EILQDNKQVE…EQDMGLEMQR (214 aa). The interval 551–623 is c; the sequence is ILQAAGQQIP…NRVNRLLVSS (73 aa).

This sequence belongs to the heat shock protein 90 family. As to quaternary structure, homodimer.

The protein localises to the cytoplasm. Molecular chaperone. Has ATPase activity. This Legionella pneumophila (strain Lens) protein is Chaperone protein HtpG.